The primary structure comprises 1220 residues: MNHIYKLKSYGIGTDRRFYGVANKTLETPDFLDPVRESFDWFLHVGIPEAFDRIFPIVSANGKLEISFRRGSLRVEKPENEYLAIREAKIKGKTYSARVYVTLVKVHSEDGEMEEQEILLAEFPFMTQGGTFIINGFEKVVVSQLIRSPGVCFRENVRNQQADDLFNKVEIIPQLGSWMEIFHKVTGNQVDTVKFRIDKHKNIPLLSFLRAIGFTNETVRKYFGNSPELLESIRRHKLESLEENLELIYRIVRKDDRITEEGLKNLIPSIIFNERRYNLASTGRFMLNAKLNLVERISQTYLAEDLVSKKNKILFKKGTYITRQLALEIQEKFNNEEIPLSEIEGVDSTIYARQLEITRNENLWKRFYVAIVKVWPNKKSMLQESEPVNVIATDPNLNEKTLVLSDIIAIVSYYFNLLSNLGKSDDPDSLVNKRIVSVGELLQNQFLIALTKIEKNSKEKISTKSDLSQLTVKSIINNKPIYNQFKNFFNSSKLSQFMDQINPLGEMASKRKVTSLGPGGLNRDTAQFEVRDVHTTHYGRICPVETPEGQNIGLILNFSVFSRINQYGFIITPYYQVKNRIVDYSKVHWLAASEEFDKSFAQSGVEIDQNNRIIPDKLTVRKNQTYLVLDAEQVNYIDVSSMQMTSISASAIPFLENNDANRALMGSNMQRQAVPLIKSEAPLVATGIEEAVARFSATNLRASISGKVTYVDAKKIIIDDGEKPEIHYLRYFEKSNQETLILQKPTVKVGDKVKKGQLICDGPSTDNGELALGKNVLVAFSTWYGYNYEDAIIISEKLVKDDVFTSIHIQEQTIKFRSTKAGNDILTAEIPNASAKSRLHLDANGIVIVGSEVDTGDILVGRTSPKGEDNPTAEEKLMAAIWGKKALAQKDTSLRVKNGEGGTVIDVQILSRDQGDNLEEGVGMLIKILIAQKRKIKVGDKMAGRHGNKGVVSVILPVEDMPFLEDGTPVDIVLNPQGVPSRMNIGQVLELHLGMVAKKLKTKFVTPVFDGIKIETIKKLFDEANIPESGKFKLFDGISGQPFENPVSVGYMYMLKLLHMVDDKMHARSIGPYSLTTQQPLGGKSQNGGQRFGEMETWALESFGATSVLSELLTYKSDNIQGRNLLYNNIISGGKIPSPGTPESFNVLAYELRGLLIKLEVHKNDQENQEVEEIKDPLELPEIPSNFIDEYNQDGRIELNKLEEFADFDEENIDFDKLTR.

The protein belongs to the RNA polymerase beta chain family. As to quaternary structure, the RNAP catalytic core consists of 2 alpha, 1 beta, 1 beta' and 1 omega subunit. When a sigma factor is associated with the core the holoenzyme is formed, which can initiate transcription.

It catalyses the reaction RNA(n) + a ribonucleoside 5'-triphosphate = RNA(n+1) + diphosphate. In terms of biological role, DNA-dependent RNA polymerase catalyzes the transcription of DNA into RNA using the four ribonucleoside triphosphates as substrates. The sequence is that of DNA-directed RNA polymerase subunit beta from Mesomycoplasma hyopneumoniae (strain J / ATCC 25934 / NCTC 10110) (Mycoplasma hyopneumoniae).